Here is a 293-residue protein sequence, read N- to C-terminus: ATP synthase gamma chain (293 aa).

Belongs to the ATPase gamma chain family. In terms of assembly, F-type ATPases have 2 components, CF(1) - the catalytic core - and CF(0) - the membrane proton channel. CF(1) has five subunits: alpha(3), beta(3), gamma(1), delta(1), epsilon(1). CF(0) has three main subunits: a, b and c.

The protein resides in the cell inner membrane. Functionally, produces ATP from ADP in the presence of a proton gradient across the membrane. The gamma chain is believed to be important in regulating ATPase activity and the flow of protons through the CF(0) complex. This Nitrosospira multiformis (strain ATCC 25196 / NCIMB 11849 / C 71) protein is ATP synthase gamma chain.